Here is a 423-residue protein sequence, read N- to C-terminus: Anhydromevalonate phosphate decarboxylase (423 aa).

Mn(2+) contacts are provided by Asn-134 and Glu-197. Asp-245 serves as the catalytic Proton acceptor.

This sequence belongs to the UbiD family. It depends on prenylated FMN as a cofactor. Mn(2+) serves as cofactor.

It catalyses the reaction (2E)-3-methyl-5-phosphooxypent-2-enoate + H(+) = isopentenyl phosphate + CO2. Its pathway is isoprenoid biosynthesis; isopentenyl diphosphate biosynthesis via mevalonate pathway. Functionally, catalyzes the conversion of trans-anhydromevalonate 5-phosphate (tAHMP) into isopentenyl phosphate. Involved in the archaeal mevalonate (MVA) pathway, which provides fundamental precursors for isoprenoid biosynthesis, such as isopentenyl diphosphate (IPP) and dimethylallyl diphosphate (DMAPP). This chain is Anhydromevalonate phosphate decarboxylase, found in Methanothermobacter thermautotrophicus (strain ATCC 29096 / DSM 1053 / JCM 10044 / NBRC 100330 / Delta H) (Methanobacterium thermoautotrophicum).